Here is a 289-residue protein sequence, read N- to C-terminus: MISAKEIRSKIASVKSTQKITKAMEMVAASKMRKSQESMSATRPYAEMIRKVIGHLALGNLEYKHPYLQERKVKRVGYLVVSTDRGLCGGLNVNLFKKILTDMHDQSEKNVASELSLIGSKGVAFFNSIGAKIVAQVTGISDKPSLPDIIGPVQAMLKAYDEGRLDKLYIANNRFINTMSQQPQITQLLPLLPMDEGQIGVTKKSWDYLYEPEPKVLLDTLLRRYIESQVYQGVVENISSEQAARMVAMKAATDNGGNLIDELQLIYNKARQASITQELTEIVGGASAL.

It belongs to the ATPase gamma chain family. In terms of assembly, F-type ATPases have 2 components, CF(1) - the catalytic core - and CF(0) - the membrane proton channel. CF(1) has five subunits: alpha(3), beta(3), gamma(1), delta(1), epsilon(1). CF(0) has three main subunits: a, b and c.

Its subcellular location is the cell membrane. Produces ATP from ADP in the presence of a proton gradient across the membrane. The gamma chain is believed to be important in regulating ATPase activity and the flow of protons through the CF(0) complex. The chain is ATP synthase gamma chain from Hamiltonella defensa subsp. Acyrthosiphon pisum (strain 5AT).